We begin with the raw amino-acid sequence, 453 residues long: Kynureninase (453 aa).

Pyridoxal 5'-phosphate is bound by residues L114, T115, 142-145, D232, H235, and Y257; that span reads FPSD. K258 carries the N6-(pyridoxal phosphate)lysine modification. Position 286 (W286) interacts with pyridoxal 5'-phosphate.

This sequence belongs to the kynureninase family. In terms of assembly, homodimer. Requires pyridoxal 5'-phosphate as cofactor.

Its subcellular location is the cytoplasm. It carries out the reaction L-kynurenine + H2O = anthranilate + L-alanine + H(+). The enzyme catalyses 3-hydroxy-L-kynurenine + H2O = 3-hydroxyanthranilate + L-alanine + H(+). It participates in amino-acid degradation; L-kynurenine degradation; L-alanine and anthranilate from L-kynurenine: step 1/1. Its pathway is cofactor biosynthesis; NAD(+) biosynthesis; quinolinate from L-kynurenine: step 2/3. Its function is as follows. Catalyzes the cleavage of L-kynurenine (L-Kyn) and L-3-hydroxykynurenine (L-3OHKyn) into anthranilic acid (AA) and 3-hydroxyanthranilic acid (3-OHAA), respectively. The sequence is that of Kynureninase from Cryptococcus neoformans var. neoformans serotype D (strain JEC21 / ATCC MYA-565) (Filobasidiella neoformans).